The primary structure comprises 236 residues: Uridylate kinase (236 aa).

Position 12 to 15 (K12 to G15) interacts with ATP. Positions G20–G25 are involved in allosteric activation by GTP. G54 is a binding site for UMP. Residues G55 and R59 each coordinate ATP. UMP is bound by residues D72 and T133–T140. ATP-binding residues include Y166 and D169.

It belongs to the UMP kinase family. In terms of assembly, homohexamer.

Its subcellular location is the cytoplasm. It catalyses the reaction UMP + ATP = UDP + ADP. It functions in the pathway pyrimidine metabolism; CTP biosynthesis via de novo pathway; UDP from UMP (UMPK route): step 1/1. Its activity is regulated as follows. Allosterically activated by GTP. Inhibited by UTP. Catalyzes the reversible phosphorylation of UMP to UDP. This chain is Uridylate kinase, found in Clostridium acetobutylicum (strain ATCC 824 / DSM 792 / JCM 1419 / IAM 19013 / LMG 5710 / NBRC 13948 / NRRL B-527 / VKM B-1787 / 2291 / W).